A 91-amino-acid chain; its full sequence is DNA-directed RNA polymerase subunit omega (91 aa).

This sequence belongs to the RNA polymerase subunit omega family. In terms of assembly, the RNAP catalytic core consists of 2 alpha, 1 beta, 1 beta' and 1 omega subunit. When a sigma factor is associated with the core the holoenzyme is formed, which can initiate transcription.

The catalysed reaction is RNA(n) + a ribonucleoside 5'-triphosphate = RNA(n+1) + diphosphate. Promotes RNA polymerase assembly. Latches the N- and C-terminal regions of the beta' subunit thereby facilitating its interaction with the beta and alpha subunits. The sequence is that of DNA-directed RNA polymerase subunit omega from Pseudoalteromonas translucida (strain TAC 125).